The following is a 226-amino-acid chain: Ribonuclease 3 (226 aa).

Residues 6–128 form the RNase III domain; the sequence is FNKLQKKMGY…IIGGIFLDSN (123 aa). Residue Glu41 participates in Mg(2+) binding. Residue Asp45 is part of the active site. Residues Asn114 and Glu117 each coordinate Mg(2+). Glu117 is an active-site residue. A DRBM domain is found at 155-225; the sequence is DPKTRLQEYL…AKQALLLFNI (71 aa).

It belongs to the ribonuclease III family. As to quaternary structure, homodimer. Requires Mg(2+) as cofactor.

It is found in the cytoplasm. It catalyses the reaction Endonucleolytic cleavage to 5'-phosphomonoester.. Digests double-stranded RNA. Involved in the processing of primary rRNA transcript to yield the immediate precursors to the large and small rRNAs (23S and 16S). Processes some mRNAs, and tRNAs when they are encoded in the rRNA operon. Processes pre-crRNA and tracrRNA of type II CRISPR loci if present in the organism. This is Ribonuclease 3 from Wigglesworthia glossinidia brevipalpis.